A 220-amino-acid chain; its full sequence is Ribose-5-phosphate isomerase A (220 aa).

Substrate is bound by residues 28 to 31 (TGST), 81 to 84 (DGAD), and 94 to 97 (KGGG). Glutamate 103 functions as the Proton acceptor in the catalytic mechanism. Residue lysine 121 coordinates substrate.

This sequence belongs to the ribose 5-phosphate isomerase family. As to quaternary structure, homodimer.

It catalyses the reaction aldehydo-D-ribose 5-phosphate = D-ribulose 5-phosphate. It functions in the pathway carbohydrate degradation; pentose phosphate pathway; D-ribose 5-phosphate from D-ribulose 5-phosphate (non-oxidative stage): step 1/1. Its function is as follows. Catalyzes the reversible conversion of ribose-5-phosphate to ribulose 5-phosphate. The chain is Ribose-5-phosphate isomerase A from Vesicomyosocius okutanii subsp. Calyptogena okutanii (strain HA).